A 110-amino-acid chain; its full sequence is UPF0060 membrane protein Francci3_2786 (110 aa).

The next 4 helical transmembrane spans lie at 8-28 (LLFV…WQGV), 33-53 (GPVW…VATL), 62-82 (ILAA…VAVD), and 87-107 (DRYD…IMYA).

Belongs to the UPF0060 family.

It is found in the cell membrane. The chain is UPF0060 membrane protein Francci3_2786 from Frankia casuarinae (strain DSM 45818 / CECT 9043 / HFP020203 / CcI3).